The chain runs to 69 residues: Toxin Tma2 (69 aa).

Residues 2–66 (KDDYPVDTAE…SPTKTSKRCN (65 aa)) enclose the LCN-type CS-alpha/beta domain. Cystine bridges form between C14–C65, C18–C41, C27–C48, and C31–C50.

This sequence belongs to the long (4 C-C) scorpion toxin superfamily. Sodium channel inhibitor family. Expressed by the venom gland.

Its subcellular location is the secreted. In terms of biological role, inhibits voltage-gated sodium channels (Nav). This toxin shows insect lethality against crickets. In Tityus macrochirus (Scorpion), this protein is Toxin Tma2.